The primary structure comprises 296 residues: NADH-cytochrome b5 reductase 2-A (296 aa).

Residues 15–35 (FVIGAPTIALCSYYYSSGAFL) form a helical membrane-spanning segment. The 105-residue stretch at 47-151 (NNWIDLPISR…KGPIPKWKWV (105 aa)) folds into the FAD-binding FR-type domain. Position 154–189 (154–189 (SFESITLIGGGTGITPLYQLIHAITKNPNDKTKIRL)) interacts with FAD.

It belongs to the flavoprotein pyridine nucleotide cytochrome reductase family. FAD serves as cofactor.

The protein resides in the mitochondrion outer membrane. It carries out the reaction 2 Fe(III)-[cytochrome b5] + NADH = 2 Fe(II)-[cytochrome b5] + NAD(+) + H(+). May mediate the reduction of outer membrane cytochrome b5. In Vanderwaltozyma polyspora (strain ATCC 22028 / DSM 70294 / BCRC 21397 / CBS 2163 / NBRC 10782 / NRRL Y-8283 / UCD 57-17) (Kluyveromyces polysporus), this protein is NADH-cytochrome b5 reductase 2-A (MCR1A).